Here is a 211-residue protein sequence, read N- to C-terminus: Uracil phosphoribosyltransferase (211 aa).

5-phospho-alpha-D-ribose 1-diphosphate is bound by residues Arg-78, Arg-103, and 130-138 (DPMLATGGT). Uracil contacts are provided by residues Ile-196 and 201-203 (GDA). Position 202 (Asp-202) interacts with 5-phospho-alpha-D-ribose 1-diphosphate.

This sequence belongs to the UPRTase family. Mg(2+) is required as a cofactor.

The catalysed reaction is UMP + diphosphate = 5-phospho-alpha-D-ribose 1-diphosphate + uracil. It participates in pyrimidine metabolism; UMP biosynthesis via salvage pathway; UMP from uracil: step 1/1. Allosterically activated by GTP. Catalyzes the conversion of uracil and 5-phospho-alpha-D-ribose 1-diphosphate (PRPP) to UMP and diphosphate. This chain is Uracil phosphoribosyltransferase, found in Kineococcus radiotolerans (strain ATCC BAA-149 / DSM 14245 / SRS30216).